Reading from the N-terminus, the 250-residue chain is 3-deoxy-manno-octulosonate cytidylyltransferase 1 (250 aa).

Belongs to the KdsB family.

The protein resides in the cytoplasm. It catalyses the reaction 3-deoxy-alpha-D-manno-oct-2-ulosonate + CTP = CMP-3-deoxy-beta-D-manno-octulosonate + diphosphate. It participates in nucleotide-sugar biosynthesis; CMP-3-deoxy-D-manno-octulosonate biosynthesis; CMP-3-deoxy-D-manno-octulosonate from 3-deoxy-D-manno-octulosonate and CTP: step 1/1. It functions in the pathway bacterial outer membrane biogenesis; lipopolysaccharide biosynthesis. Activates KDO (a required 8-carbon sugar) for incorporation into bacterial lipopolysaccharide in Gram-negative bacteria. The protein is 3-deoxy-manno-octulosonate cytidylyltransferase 1 of Actinobacillus pleuropneumoniae serotype 5b (strain L20).